The chain runs to 122 residues: Elsinochromes biosynthesis cluster protein HP4 (122 aa).

Its function is as follows. Part of the gene cluster that mediates the biosynthesis of elsinochromes, pigments consisting of at least four interconvertible tautomers (A, B, C and D) that have a core phenolic quinone to which various side chains are attached and which play an important role in fungal pathogenesis. The non-reducing polyketide synthase PKS1 was proposed to iteratively catalyze decarboxylation between acetyl-CoA and malonyl-CoA subunits for polyketide chain elongation. The released polyketide undergoes cyclization to form an aromatic ring, and proceeds via serial modification steps to produce the heptaketide back- bone of elsinochrome. As elsinochrome has a symmetrical structure, two identical heptaketides are fused to form a core 1,2-dihydrobenzo-perylene ring structure, which can then be successively modified to produce the various derivatives of elsinochrome. Some of these reactions may be cooperatively carried out, at least in part, by the products of RDT1, OXR1 and PKS1. PRF1, embedded within the elsinochrome cluster possibly functions to stabilize some of the biosynthetic enzymes required for elsinochrome production. As prefoldin is a hexamer containing 2 a and 4 b subunits, additional prefoldin subunits, whose coding genes may not immediately link to the elsinochrome biosynthetic gene cluster, are required to fulfill the chaperone function. In addition, no methyltransferase-coding gene exists within the biosynthetic gene cluster, even though elsinochrome has four methyl groups at positions C3, C7, C8 and C12. Apparently, the identified gene cluster does not contain the entire entourage of genes responsible for elsinochrome biosynthesis. Once elsinochrome is synthesized, it must be exported outside the fungal cells, which is probably accomplished by the ECT1 transporter, to avoid toxicity. The sequence is that of Elsinochromes biosynthesis cluster protein HP4 from Elsinoe fawcettii (Citrus scab fungus).